A 453-amino-acid polypeptide reads, in one-letter code: Bifunctional protein GlmU (453 aa).

The pyrophosphorylase stretch occupies residues 1–225 (MHAHVILAAG…AEEALGVNTR (225 aa)). UDP-N-acetyl-alpha-D-glucosamine-binding positions include 7-10 (LAAG), Lys21, Gln72, and 77-78 (GT). Mg(2+) is bound at residue Asp102. UDP-N-acetyl-alpha-D-glucosamine-binding residues include Gly138, Glu152, Asn167, and Asn223. A Mg(2+)-binding site is contributed by Asn223. Positions 226-246 (EELARVEGVLLRRLRAEWMGK) are linker. Residues 247-453 (GVRMILPETI…GYALRKLGEG (207 aa)) are N-acetyltransferase. UDP-N-acetyl-alpha-D-glucosamine is bound by residues Arg329 and Lys347. The Proton acceptor role is filled by His359. Tyr362 and Asn373 together coordinate UDP-N-acetyl-alpha-D-glucosamine. Residues Ala376, 382–383 (NY), Ser401, Ala419, and Arg436 contribute to the acetyl-CoA site.

In the N-terminal section; belongs to the N-acetylglucosamine-1-phosphate uridyltransferase family. It in the C-terminal section; belongs to the transferase hexapeptide repeat family. Homotrimer. Mg(2+) serves as cofactor.

Its subcellular location is the cytoplasm. The catalysed reaction is alpha-D-glucosamine 1-phosphate + acetyl-CoA = N-acetyl-alpha-D-glucosamine 1-phosphate + CoA + H(+). It catalyses the reaction N-acetyl-alpha-D-glucosamine 1-phosphate + UTP + H(+) = UDP-N-acetyl-alpha-D-glucosamine + diphosphate. It participates in nucleotide-sugar biosynthesis; UDP-N-acetyl-alpha-D-glucosamine biosynthesis; N-acetyl-alpha-D-glucosamine 1-phosphate from alpha-D-glucosamine 6-phosphate (route II): step 2/2. It functions in the pathway nucleotide-sugar biosynthesis; UDP-N-acetyl-alpha-D-glucosamine biosynthesis; UDP-N-acetyl-alpha-D-glucosamine from N-acetyl-alpha-D-glucosamine 1-phosphate: step 1/1. The protein operates within bacterial outer membrane biogenesis; LPS lipid A biosynthesis. Functionally, catalyzes the last two sequential reactions in the de novo biosynthetic pathway for UDP-N-acetylglucosamine (UDP-GlcNAc). The C-terminal domain catalyzes the transfer of acetyl group from acetyl coenzyme A to glucosamine-1-phosphate (GlcN-1-P) to produce N-acetylglucosamine-1-phosphate (GlcNAc-1-P), which is converted into UDP-GlcNAc by the transfer of uridine 5-monophosphate (from uridine 5-triphosphate), a reaction catalyzed by the N-terminal domain. The sequence is that of Bifunctional protein GlmU from Thermus thermophilus (strain ATCC BAA-163 / DSM 7039 / HB27).